The sequence spans 378 residues: Zinc transporter 7 (378 aa).

Topologically, residues 1–37 (MLPLSIKDDEYKPPKFNLFGKISGWFRSILSDKTSRN) are cytoplasmic. A helical transmembrane segment spans residues 38–58 (LFFFLCLNLSFAFVELLYGIW). Over 59 to 67 (SNCLGLISD) the chain is Lumenal. The helical transmembrane segment at 68 to 88 (SFHMFFDSTAILAGLAASVIS) threads the bilayer. Over 89-102 (KWRDNDAFSYGYVR) the chain is Cytoplasmic. The chain crosses the membrane as a helical span at residues 103–123 (AEVLAGFVNGLFLIFTAFFIF). Over 124–140 (SEGVERALAPPDVHHER) the chain is Lumenal. A helical membrane pass occupies residues 141–161 (LLLVSILGFVVNLVGIFVFNH). Residues 161–220 (HGGHGHSHGSGHGHSHSLFNGALDHSHGHEDHCHSHEAKHGAAHSHDHDHAHGHGHLHSH) are his-rich loop. The Cytoplasmic portion of the chain corresponds to 162–238 (GGHGHSHGSG…AGPSRQILQG (77 aa)). Over residues 186 to 223 (SHGHEDHCHSHEAKHGAAHSHDHDHAHGHGHLHSHDGP) the composition is skewed to basic and acidic residues. Residues 186–224 (SHGHEDHCHSHEAKHGAAHSHDHDHAHGHGHLHSHDGPS) form a disordered region. Residues 239-259 (VFLHILADTLGSIGVIASAIM) traverse the membrane as a helical segment. The Lumenal segment spans residues 260 to 264 (MQNFG). The helical transmembrane segment at 265–285 (LMIADPICSILIAILIVVSVI) threads the bilayer. At 286–378 (PLLRESVGIL…LYVQIDFAAM (93 aa)) the chain is on the cytoplasmic side.

The protein belongs to the cation diffusion facilitator (CDF) transporter (TC 2.A.4) family. SLC30A subfamily. As to quaternary structure, homooligomer. In terms of tissue distribution, highly expressed in liver, spleen, duodenum and part of the jejunum of small intestine (at protein level). Moderately expressed in kidney, lung, and brain. Barely detectable in heart. In brain, expressed in cerebellum, cerebral cortex and hippocampus (at protein level).

The protein localises to the golgi apparatus membrane. It is found in the cytoplasmic vesicle. Its subcellular location is the golgi apparatus. The protein resides in the trans-Golgi network. It localises to the sarcoplasmic reticulum. The protein localises to the mitochondrion. It carries out the reaction Zn(2+)(in) = Zn(2+)(out). In terms of biological role, zinc ion transporter mediating zinc entry from the cytosol into the lumen of organelles along the secretory pathway. By contributing to zinc ion homeostasis within the early secretory pathway, regulates the activation and folding of enzymes like alkaline phosphatases. This Mus musculus (Mouse) protein is Zinc transporter 7.